Reading from the N-terminus, the 499-residue chain is Low-affinity inorganic phosphate transporter PitB (499 aa).

A run of 10 helical transmembrane segments spans residues 5–25 (FVGL…FVLF), 52–72 (LAVV…GLSV), 94–114 (LAMV…TWFF), 124–144 (LIGA…SSVM), 155–175 (IFSS…GLIF), 207–227 (PFWT…SHGA), 233–253 (GIGL…VVNM), 382–402 (APVW…MIGW), 430–450 (AAVS…THVL), and 473–493 (ILMA…GLYW).

It belongs to the inorganic phosphate transporter (PiT) (TC 2.A.20) family. Pit subfamily.

Its subcellular location is the cell inner membrane. It carries out the reaction phosphate(in) + H(+)(in) = phosphate(out) + H(+)(out). In terms of biological role, low-affinity inorganic phosphate transporter. In Escherichia coli (strain K12), this protein is Low-affinity inorganic phosphate transporter PitB.